The primary structure comprises 243 residues: Ubiquinone/menaquinone biosynthesis C-methyltransferase UbiE (243 aa).

Residues Thr69, Asp90, and 116 to 117 contribute to the S-adenosyl-L-methionine site; that span reads DA.

It belongs to the class I-like SAM-binding methyltransferase superfamily. MenG/UbiE family.

It catalyses the reaction a 2-demethylmenaquinol + S-adenosyl-L-methionine = a menaquinol + S-adenosyl-L-homocysteine + H(+). The catalysed reaction is a 2-methoxy-6-(all-trans-polyprenyl)benzene-1,4-diol + S-adenosyl-L-methionine = a 5-methoxy-2-methyl-3-(all-trans-polyprenyl)benzene-1,4-diol + S-adenosyl-L-homocysteine + H(+). It functions in the pathway quinol/quinone metabolism; menaquinone biosynthesis; menaquinol from 1,4-dihydroxy-2-naphthoate: step 2/2. Its pathway is cofactor biosynthesis; ubiquinone biosynthesis. Its function is as follows. Methyltransferase required for the conversion of demethylmenaquinol (DMKH2) to menaquinol (MKH2) and the conversion of 2-polyprenyl-6-methoxy-1,4-benzoquinol (DDMQH2) to 2-polyprenyl-3-methyl-6-methoxy-1,4-benzoquinol (DMQH2). The sequence is that of Ubiquinone/menaquinone biosynthesis C-methyltransferase UbiE from Burkholderia ambifaria (strain MC40-6).